A 586-amino-acid polypeptide reads, in one-letter code: Serine/threonine-protein kinase TDA1 (586 aa).

A disordered region spans residues 1-26 (MTTASSSASQLQQRLPEEKPWPQLSG). The Protein kinase domain maps to 39–351 (VTNHNSLGDG…AKNLKQHPFI (313 aa)). ATP is bound by residues 45–53 (LGDGNFSVV) and Lys-68. Asp-180 acts as the Proton acceptor in catalysis. Residues 503-524 (TTPESRSNFNTPKTLSRQGSST) are disordered. At Thr-504 the chain carries Phosphothreonine. A phosphoserine mark is found at Ser-509 and Ser-518. A Phosphothreonine modification is found at Thr-538. Position 578 is a phosphoserine (Ser-578).

It belongs to the protein kinase superfamily. Ser/Thr protein kinase family. Interacts with RIM11.

It is found in the cytoplasm. The protein localises to the nucleus. It carries out the reaction L-seryl-[protein] + ATP = O-phospho-L-seryl-[protein] + ADP + H(+). It catalyses the reaction L-threonyl-[protein] + ATP = O-phospho-L-threonyl-[protein] + ADP + H(+). Functionally, serine/threonine protein kinase shown to have protein phosphorylation activity in vitro. The sequence is that of Serine/threonine-protein kinase TDA1 (TDA1) from Saccharomyces cerevisiae (strain ATCC 204508 / S288c) (Baker's yeast).